A 465-amino-acid polypeptide reads, in one-letter code: Ribulose bisphosphate carboxylase large chain (465 aa).

K4 bears the N6,N6,N6-trimethyllysine mark. The substrate site is built by N113 and T163. The active-site Proton acceptor is the K165. K167 contributes to the substrate binding site. Mg(2+) is bound by residues K191, D193, and E194. N6-carboxylysine is present on K191. The Proton acceptor role is filled by H284. Substrate is bound by residues R285, H317, and S369.

This sequence belongs to the RuBisCO large chain family. Type I subfamily. As to quaternary structure, heterohexadecamer of 8 large chains and 8 small chains; disulfide-linked. The disulfide link is formed within the large subunit homodimers. Mg(2+) is required as a cofactor. The disulfide bond which can form in the large chain dimeric partners within the hexadecamer appears to be associated with oxidative stress and protein turnover.

It localises to the plastid. It is found in the chloroplast. It carries out the reaction 2 (2R)-3-phosphoglycerate + 2 H(+) = D-ribulose 1,5-bisphosphate + CO2 + H2O. The enzyme catalyses D-ribulose 1,5-bisphosphate + O2 = 2-phosphoglycolate + (2R)-3-phosphoglycerate + 2 H(+). In terms of biological role, ruBisCO catalyzes two reactions: the carboxylation of D-ribulose 1,5-bisphosphate, the primary event in carbon dioxide fixation, as well as the oxidative fragmentation of the pentose substrate in the photorespiration process. Both reactions occur simultaneously and in competition at the same active site. The sequence is that of Ribulose bisphosphate carboxylase large chain from Fragaria ananassa (Strawberry).